Consider the following 286-residue polypeptide: tRNA pseudouridine synthase B (286 aa).

The Nucleophile role is filled by D40.

It belongs to the pseudouridine synthase TruB family. Type 1 subfamily.

It catalyses the reaction uridine(55) in tRNA = pseudouridine(55) in tRNA. Functionally, responsible for synthesis of pseudouridine from uracil-55 in the psi GC loop of transfer RNAs. The sequence is that of tRNA pseudouridine synthase B from Mesoplasma florum (strain ATCC 33453 / NBRC 100688 / NCTC 11704 / L1) (Acholeplasma florum).